The primary structure comprises 200 residues: GTP cyclohydrolase-2 (200 aa).

50–54 (RVHSE) is a GTP binding site. 3 residues coordinate Zn(2+): cysteine 55, cysteine 66, and cysteine 68. Residues glutamine 71, 93-95 (EGR), and threonine 115 contribute to the GTP site. The Proton acceptor role is filled by aspartate 127. Arginine 129 acts as the Nucleophile in catalysis. The GTP site is built by threonine 150 and lysine 155.

This sequence belongs to the GTP cyclohydrolase II family. The cofactor is Zn(2+).

The catalysed reaction is GTP + 4 H2O = 2,5-diamino-6-hydroxy-4-(5-phosphoribosylamino)-pyrimidine + formate + 2 phosphate + 3 H(+). Its pathway is cofactor biosynthesis; riboflavin biosynthesis; 5-amino-6-(D-ribitylamino)uracil from GTP: step 1/4. In terms of biological role, catalyzes the conversion of GTP to 2,5-diamino-6-ribosylamino-4(3H)-pyrimidinone 5'-phosphate (DARP), formate and pyrophosphate. The polypeptide is GTP cyclohydrolase-2 (Acinetobacter baumannii (strain AB307-0294)).